A 367-amino-acid polypeptide reads, in one-letter code: FAD synthetase 2, chloroplastic (367 aa).

The N-terminal 57 residues, 1–57 (MLCGGSRVLQHLSDHNHHNSIGLGLGFCGAKIVQLSSFFLRPSQAMAKSHHFSRKLR), are a transit peptide targeting the chloroplast.

Mg(2+) serves as cofactor.

It is found in the plastid. The protein localises to the chloroplast. The catalysed reaction is FMN + ATP + H(+) = FAD + diphosphate. Its pathway is cofactor biosynthesis; FAD biosynthesis; FAD from FMN: step 1/1. Functionally, catalyzes the adenylation of flavin mononucleotide (FMN) to form flavin adenine dinucleotide (FAD) coenzyme. This is FAD synthetase 2, chloroplastic from Arabidopsis thaliana (Mouse-ear cress).